The sequence spans 281 residues: Tryptophan synthase alpha chain (281 aa).

Catalysis depends on proton acceptor residues glutamate 49 and aspartate 60.

Belongs to the TrpA family. In terms of assembly, tetramer of two alpha and two beta chains.

It catalyses the reaction (1S,2R)-1-C-(indol-3-yl)glycerol 3-phosphate + L-serine = D-glyceraldehyde 3-phosphate + L-tryptophan + H2O. It participates in amino-acid biosynthesis; L-tryptophan biosynthesis; L-tryptophan from chorismate: step 5/5. Functionally, the alpha subunit is responsible for the aldol cleavage of indoleglycerol phosphate to indole and glyceraldehyde 3-phosphate. The chain is Tryptophan synthase alpha chain from Methanocaldococcus jannaschii (strain ATCC 43067 / DSM 2661 / JAL-1 / JCM 10045 / NBRC 100440) (Methanococcus jannaschii).